Here is a 367-residue protein sequence, read N- to C-terminus: Anthranilate phosphoribosyltransferase (367 aa).

Positions 1–17 (MVLSSEASSAADHSAAA) are enriched in low complexity. Residues 1-22 (MVLSSEASSAADHSAAAPIPTS) are disordered. 5-phospho-alpha-D-ribose 1-diphosphate-binding positions include glycine 104, 107–108 (GD), threonine 112, 114–117 (NLST), 132–140 (KHGNRAASS), and glycine 144. An anthranilate-binding site is contributed by glycine 104. Serine 116 is a Mg(2+) binding site. Asparagine 135 contributes to the anthranilate binding site. An anthranilate-binding site is contributed by arginine 190. Mg(2+) is bound by residues aspartate 248 and glutamate 249.

The protein belongs to the anthranilate phosphoribosyltransferase family. Homodimer. Requires Mg(2+) as cofactor.

It catalyses the reaction N-(5-phospho-beta-D-ribosyl)anthranilate + diphosphate = 5-phospho-alpha-D-ribose 1-diphosphate + anthranilate. Its pathway is amino-acid biosynthesis; L-tryptophan biosynthesis; L-tryptophan from chorismate: step 2/5. Catalyzes the transfer of the phosphoribosyl group of 5-phosphorylribose-1-pyrophosphate (PRPP) to anthranilate to yield N-(5'-phosphoribosyl)-anthranilate (PRA). The sequence is that of Anthranilate phosphoribosyltransferase from Mycobacterium marinum (strain ATCC BAA-535 / M).